We begin with the raw amino-acid sequence, 174 residues long: Gamma-crystallin S (174 aa).

Beta/gamma crystallin 'Greek key' domains lie at 2-40 (GRII…RVES) and 41-83 (GAWV…KMIH). The connecting peptide stretch occupies residues 84–89 (FVSGSE). 2 consecutive Beta/gamma crystallin 'Greek key' domains span residues 90–130 (YKIQ…KVLD) and 131–173 (GIWI…KRLM).

Belongs to the beta/gamma-crystallin family.

In terms of biological role, crystallins are the dominant structural components of the vertebrate eye lens. This is Gamma-crystallin S (crygs) from Cyprinus carpio (Common carp).